The sequence spans 557 residues: Formate--tetrahydrofolate ligase (557 aa).

An ATP-binding site is contributed by Thr-44–Ser-51.

This sequence belongs to the formate--tetrahydrofolate ligase family.

It carries out the reaction (6S)-5,6,7,8-tetrahydrofolate + formate + ATP = (6R)-10-formyltetrahydrofolate + ADP + phosphate. It functions in the pathway one-carbon metabolism; tetrahydrofolate interconversion. This chain is Formate--tetrahydrofolate ligase, found in Desulfotalea psychrophila (strain LSv54 / DSM 12343).